Reading from the N-terminus, the 159-residue chain is Endoribonuclease YbeY (159 aa).

Zn(2+)-binding residues include His125, His129, and His135.

This sequence belongs to the endoribonuclease YbeY family. It depends on Zn(2+) as a cofactor.

Its subcellular location is the cytoplasm. Functionally, single strand-specific metallo-endoribonuclease involved in late-stage 70S ribosome quality control and in maturation of the 3' terminus of the 16S rRNA. The sequence is that of Endoribonuclease YbeY from Limosilactobacillus reuteri (strain DSM 20016) (Lactobacillus reuteri).